A 79-amino-acid polypeptide reads, in one-letter code: Cytochrome c oxidase assembly factor 6 homolog (79 aa).

Residues 9 to 52 (RQACWGARDEYWKCLDENTEDASKCKKLRSSFESSCPQQWIKYF) enclose the CHCH domain. A Cx9C motif motif is present at residues 12–22 (CWGARDEYWKC). 2 disulfide bridges follow: C12–C44 and C22–C33. Positions 33 to 44 (CKKLRSSFESSC) match the Cx10C motif motif.

The protein belongs to the cytochrome c oxidase subunit 6B family. Found in a complex with TMEM177, COX20, MT-CO2/COX2, COX18, SCO1 and SCO2. Interacts with COA1, MT-CO2/COX2, SCO1, SCO2 and COX20. Interacts with COX20 in a MT-CO2/COX2- and COX18-dependent manner. Interacts with COX16.

It is found in the mitochondrion intermembrane space. Functionally, involved in the maturation of the mitochondrial respiratory chain complex IV subunit MT-CO2/COX2. Thereby, may regulate early steps of complex IV assembly. Mitochondrial respiratory chain complex IV or cytochrome c oxidase is the component of the respiratory chain that catalyzes the transfer of electrons from intermembrane space cytochrome c to molecular oxygen in the matrix and as a consequence contributes to the proton gradient involved in mitochondrial ATP synthesis. May also be required for efficient formation of respiratory supercomplexes comprised of complexes III and IV. This chain is Cytochrome c oxidase assembly factor 6 homolog (COA6), found in Bos taurus (Bovine).